Reading from the N-terminus, the 1033-residue chain is Probable beta-glucosidase E (1033 aa).

Positions 1–71 (MAPPDSTHGG…RSGSYKLRPV (71 aa)) are disordered. Over 1 to 161 (MAPPDSTHGG…PVKYARIWWR (161 aa)) the chain is Cytoplasmic. 2 stretches are compositionally biased toward basic and acidic residues: residues 11-20 (SFRDHLKTND) and 59-71 (DLERSGSYKLRPV). The chain crosses the membrane as a helical; Signal-anchor for type II membrane protein span at residues 162 to 182 (TLLAVVVTLVVVVWGFLSFAV). Over 183-1033 (SHREEPTVWP…SRDLPLMGEY (851 aa)) the chain is Extracellular. 3 N-linked (GlcNAc...) asparagine glycosylation sites follow: Asn-224, Asn-232, and Asn-418. Residue Asp-446 is part of the active site. N-linked (GlcNAc...) asparagine glycosylation is found at Asn-489, Asn-528, Asn-593, Asn-909, Asn-918, and Asn-976.

Belongs to the glycosyl hydrolase 3 family.

Its subcellular location is the cell membrane. The catalysed reaction is Hydrolysis of terminal, non-reducing beta-D-glucosyl residues with release of beta-D-glucose.. It participates in glycan metabolism; cellulose degradation. Beta-glucosidases are one of a number of cellulolytic enzymes involved in the degradation of cellulosic biomass. Catalyzes the last step releasing glucose from the inhibitory cellobiose. The chain is Probable beta-glucosidase E (bglE) from Aspergillus fumigatus (strain CBS 144.89 / FGSC A1163 / CEA10) (Neosartorya fumigata).